The following is a 180-amino-acid chain: MASSVISSAAVATRSNVTQASMVAPFTGLKSSATFPVTKKQNLDITSIASNGGRVSCMQVWPPINMKKYETLSYLPDLSDEQLLSEIEYLLKNGWVPCLEFETEHGFVYRENNKSPGYYDGRYWTMWKLPMFGCTDATQVLAEVQEAKKAYPQAWVRIIGFDNVRQVQCISFIAYKPEGY.

The transit peptide at 1–56 directs the protein to the chloroplast; that stretch reads MASSVISSAAVATRSNVTQASMVAPFTGLKSSATFPVTKKQNLDITSIASNGGRVS.

It belongs to the RuBisCO small chain family. Heterohexadecamer of 8 large and 8 small subunits. As to quaternary structure, (Microbial infection) Binds to tobamovirus movement protein; this interaction seems required for viral systemic movement.

It is found in the plastid. Its subcellular location is the chloroplast. The protein localises to the cell junction. The protein resides in the plasmodesma. In terms of biological role, ruBisCO catalyzes two reactions: the carboxylation of D-ribulose 1,5-bisphosphate, the primary event in carbon dioxide fixation, as well as the oxidative fragmentation of the pentose substrate. Both reactions occur simultaneously and in competition at the same active site. Although the small subunit is not catalytic it is essential for maximal activity. Involved in antiviral defenses. The sequence is that of Ribulose bisphosphate carboxylase small subunit, chloroplastic 2 from Solanum lycopersicum (Tomato).